The chain runs to 413 residues: GDP-mannose-dependent alpha-mannosyltransferase (413 aa).

This sequence belongs to the glycosyltransferase group 1 family.

Its pathway is phospholipid metabolism; phosphatidylinositol metabolism. Its function is as follows. Catalyzes the addition of a mannose residue from GDP-D-mannose to GlcAGroAc2 to generate 1,2-di-O-C16/C18:1-(alpha-D-mannopyranosyl)-(1-4)-(alpha-D-glucopyranosyluronic acid)-(1-3)-glycerol(ManGlcAGroAc2). The chain is GDP-mannose-dependent alpha-mannosyltransferase (mgtA) from Corynebacterium glutamicum (strain ATCC 13032 / DSM 20300 / JCM 1318 / BCRC 11384 / CCUG 27702 / LMG 3730 / NBRC 12168 / NCIMB 10025 / NRRL B-2784 / 534).